Here is a 216-residue protein sequence, read N- to C-terminus: Elongation factor Ts (216 aa).

The segment at 81–84 is involved in Mg(2+) ion dislocation from EF-Tu; it reads TDFV.

The protein belongs to the EF-Ts family.

It is found in the cytoplasm. In terms of biological role, associates with the EF-Tu.GDP complex and induces the exchange of GDP to GTP. It remains bound to the aminoacyl-tRNA.EF-Tu.GTP complex up to the GTP hydrolysis stage on the ribosome. This Geotalea uraniireducens (strain Rf4) (Geobacter uraniireducens) protein is Elongation factor Ts.